The chain runs to 109 residues: Prothymosin alpha (109 aa).

The disordered stretch occupies residues 1–109 (MSDTSVDASV…AKKQKTDDDD (109 aa)). Positions 9–35 (SVEKTTKDLKSKDKELVEETENGKDKP) are enriched in basic and acidic residues. The segment covering 41-81 (ENEENGEDGADNEEEEEVDEEDEEDEGEGDDDEGDEDDEAD) has biased composition (acidic residues). The segment covering 99 to 109 (DAKKQKTDDDD) has biased composition (basic and acidic residues).

This sequence belongs to the pro/parathymosin family. As to expression, highly expressed in the testis.

The protein localises to the nucleus. Functionally, may have role in testicular activity. In Pelophylax lessonae (Pool frog), this protein is Prothymosin alpha.